The chain runs to 323 residues: GMP reductase (323 aa).

Cys174 functions as the Thioimidate intermediate in the catalytic mechanism. 203 to 226 (IIADGGIRHNGDIAKSVRFGASMV) is an NADP(+) binding site.

It belongs to the IMPDH/GMPR family. GuaC type 2 subfamily.

The enzyme catalyses IMP + NH4(+) + NADP(+) = GMP + NADPH + 2 H(+). Catalyzes the irreversible NADPH-dependent deamination of GMP to IMP. It functions in the conversion of nucleobase, nucleoside and nucleotide derivatives of G to A nucleotides, and in maintaining the intracellular balance of A and G nucleotides. The polypeptide is GMP reductase (Oenococcus oeni (strain ATCC BAA-331 / PSU-1)).